Consider the following 158-residue polypeptide: Arginine repressor (158 aa).

The protein belongs to the ArgR family.

It is found in the cytoplasm. It participates in amino-acid biosynthesis; L-arginine biosynthesis [regulation]. In terms of biological role, regulates arginine biosynthesis genes. This Anaeromyxobacter sp. (strain Fw109-5) protein is Arginine repressor.